A 777-amino-acid polypeptide reads, in one-letter code: Gliding motility regulatory protein (777 aa).

Residues 1-108 (MDTEALKKSL…SDLNEDLSGA (108 aa)) form the HPt domain. A Phosphohistidine; by autocatalysis modification is found at His49. 2 disordered regions span residues 129–149 (TPPA…PPAP) and 164–212 (PAPV…KSAV). 2 stretches are compositionally biased toward pro residues: residues 139–149 (VAPPPAPPPAP) and 164–177 (PAPV…PPTQ). Positions 178–197 (APVAEPGAHAAAAAPHPAAA) are enriched in low complexity. Residues 270 to 509 (DISNEVREQL…TITLRLPQSL (240 aa)) form the Histidine kinase domain. The CheW-like domain maps to 511 to 645 (LMKVLLVRLG…VPDIMAEVRR (135 aa)). The 117-residue stretch at 660–776 (RVLLVDDSPI…EVLAQAIDRL (117 aa)) folds into the Response regulatory domain. Asp709 bears the 4-aspartylphosphate mark.

It carries out the reaction ATP + protein L-histidine = ADP + protein N-phospho-L-histidine.. FrzE is involved in a sensory transduction pathway that controls the frequency at which cells reverse their gliding direction. FrzE seems to be capable of autophosphorylating itself on a histidine residue and then to transfer that group to an aspartate residue in the C-terminal part of the protein. The protein is Gliding motility regulatory protein (frzE) of Myxococcus xanthus.